Here is an 89-residue protein sequence, read N- to C-terminus: Acylphosphatase (89 aa).

One can recognise an Acylphosphatase-like domain in the interval 3 to 89; sequence RFTARVAGLV…QSDLTDFRRK (87 aa). Active-site residues include Arg-18 and Asn-36.

This sequence belongs to the acylphosphatase family.

It catalyses the reaction an acyl phosphate + H2O = a carboxylate + phosphate + H(+). This is Acylphosphatase (acyP) from Frankia casuarinae (strain DSM 45818 / CECT 9043 / HFP020203 / CcI3).